The primary structure comprises 704 residues: Elongation factor G (704 aa).

The 283-residue stretch at 8 to 290 (ARYRNIGISA…AVIDYLPSPV (283 aa)) folds into the tr-type G domain. GTP is bound by residues 17-24 (AHIDAGKT), 88-92 (DTPGH), and 142-145 (NKMD). Lysine 504 and lysine 643 each carry N6-acetyllysine.

Belongs to the TRAFAC class translation factor GTPase superfamily. Classic translation factor GTPase family. EF-G/EF-2 subfamily.

The protein localises to the cytoplasm. Functionally, catalyzes the GTP-dependent ribosomal translocation step during translation elongation. During this step, the ribosome changes from the pre-translocational (PRE) to the post-translocational (POST) state as the newly formed A-site-bound peptidyl-tRNA and P-site-bound deacylated tRNA move to the P and E sites, respectively. Catalyzes the coordinated movement of the two tRNA molecules, the mRNA and conformational changes in the ribosome. In Escherichia coli O17:K52:H18 (strain UMN026 / ExPEC), this protein is Elongation factor G.